We begin with the raw amino-acid sequence, 410 residues long: Putative transposase Rv3428c (410 aa).

Residues 40 to 220 (VPRGPVDAGS…QPLRMFEAVE (181 aa)) enclose the Integrase catalytic domain. The interval 390-410 (AANEPTTSSPASTAGGVPARP) is disordered.

It belongs to the transposase IS21/IS408/IS1162 family.

The polypeptide is Putative transposase Rv3428c (Mycobacterium tuberculosis (strain ATCC 25618 / H37Rv)).